A 297-amino-acid polypeptide reads, in one-letter code: Oxidoreductase aprR (297 aa).

It belongs to the NmrA-type oxidoreductase family. Isoflavone reductase subfamily.

The protein operates within secondary metabolite biosynthesis. Its function is as follows. Oxidoreductase; part of the gene cluster that mediates the biosynthesis of the asperipin-2a, a bicyclic peptide that possesses two macrocyclic ether rings consisting of 14- and 17-membered paracyclophans. The pathway starts with the processing of the precursor aprA by kexin proteases to produce 11 identical copies of the hexapeptide Phe-Tyr-Tyr-Thr-Gly-Tyr. Macrocyclization of asperipin-2a may accompany an alpha-hydroxylation-dehydration sequence to give an imine, which is readily hydrolyzed to yield putative ketone intermediate. The reductase aprR may be required for the final reduction to yield asperipin-2a. This chain is Oxidoreductase aprR, found in Aspergillus flavus (strain ATCC 200026 / FGSC A1120 / IAM 13836 / NRRL 3357 / JCM 12722 / SRRC 167).